The primary structure comprises 183 residues: TATA-box-binding protein (183 aa).

2 repeat units span residues 7–83 (IENV…ARTL) and 99–177 (VQNI…RQQL).

Belongs to the TBP family.

General factor that plays a role in the activation of archaeal genes transcribed by RNA polymerase. Binds specifically to the TATA box promoter element which lies close to the position of transcription initiation. This Methanothrix thermoacetophila (strain DSM 6194 / JCM 14653 / NBRC 101360 / PT) (Methanosaeta thermophila) protein is TATA-box-binding protein.